Here is a 298-residue protein sequence, read N- to C-terminus: 4-hydroxy-tetrahydrodipicolinate synthase (298 aa).

Residue Thr-51 participates in pyruvate binding. The active-site Proton donor/acceptor is the Tyr-139. Lys-167 acts as the Schiff-base intermediate with substrate in catalysis. Ile-209 is a pyruvate binding site.

Belongs to the DapA family. Homotetramer; dimer of dimers.

The protein localises to the cytoplasm. It carries out the reaction L-aspartate 4-semialdehyde + pyruvate = (2S,4S)-4-hydroxy-2,3,4,5-tetrahydrodipicolinate + H2O + H(+). It participates in amino-acid biosynthesis; L-lysine biosynthesis via DAP pathway; (S)-tetrahydrodipicolinate from L-aspartate: step 3/4. Catalyzes the condensation of (S)-aspartate-beta-semialdehyde [(S)-ASA] and pyruvate to 4-hydroxy-tetrahydrodipicolinate (HTPA). This chain is 4-hydroxy-tetrahydrodipicolinate synthase, found in Pasteurella multocida (strain Pm70).